The chain runs to 328 residues: Homeobox protein Hox-C13 (328 aa).

Positions Ala23–Ser48 are disordered. Gly residues predominate over residues Gly27–Ser45. The homeobox DNA-binding region spans Gly258–Val317.

The protein belongs to the Abd-B homeobox family. In terms of tissue distribution, expressed in differentiating keratinocytes. In the hair follicle lower matrix, expressed in all 3 hair shaft-forming compartments, i.e. cuticle, cortex and medulla. Expression stops sharply at the boundary with the germinal matrix compartment.

It localises to the nucleus. In terms of biological role, transcription factor which plays a role in hair follicle differentiation. Regulates FOXQ1 expression and that of other hair-specific genes. The chain is Homeobox protein Hox-C13 (Hoxc13) from Mus musculus (Mouse).